The primary structure comprises 183 residues: Protein GrpE (183 aa).

Positions Met1–Lys14 are enriched in basic and acidic residues. The disordered stretch occupies residues Met1–Glu20.

It belongs to the GrpE family. As to quaternary structure, homodimer.

The protein localises to the cytoplasm. Participates actively in the response to hyperosmotic and heat shock by preventing the aggregation of stress-denatured proteins, in association with DnaK and GrpE. It is the nucleotide exchange factor for DnaK and may function as a thermosensor. Unfolded proteins bind initially to DnaJ; upon interaction with the DnaJ-bound protein, DnaK hydrolyzes its bound ATP, resulting in the formation of a stable complex. GrpE releases ADP from DnaK; ATP binding to DnaK triggers the release of the substrate protein, thus completing the reaction cycle. Several rounds of ATP-dependent interactions between DnaJ, DnaK and GrpE are required for fully efficient folding. The protein is Protein GrpE of Vibrio vulnificus (strain CMCP6).